The following is a 424-amino-acid chain: Hemagglutinin-esterase (424 aa).

The N-terminal stretch at 1-16 (MFLLPRFVLVSCIIGS) is a signal peptide. The interval 7–127 (FVLVSCIIGS…SNDIWMQNKG (121 aa)) is esterase domain 1. Residues 17–392 (LGFDNPPTNV…PICVYDPLPI (376 aa)) lie on the Virion surface side of the membrane. Serine 40 acts as the Nucleophile in catalysis. The cysteines at positions 44 and 65 are disulfide-linked. N-linked (GlcNAc...) asparagine; by host glycans are attached at residues asparagine 54, asparagine 89, asparagine 153, asparagine 236, and asparagine 301. 3 disulfide bridges follow: cysteine 113/cysteine 162, cysteine 197/cysteine 276, and cysteine 205/cysteine 249. Positions 128–266 (LFYTQVYKNM…GNYLAISNEL (139 aa)) are receptor binding. The tract at residues 267–379 (LLTVPTKAIC…RCPTAADINT (113 aa)) is esterase domain 2. Residues cysteine 307 and cysteine 312 are joined by a disulfide bond. The N-linked (GlcNAc...) asparagine; by host glycan is linked to asparagine 316. Active-site charge relay system residues include aspartate 326 and histidine 329. A disulfide bridge connects residues cysteine 347 and cysteine 371. An N-linked (GlcNAc...) asparagine; by host glycan is attached at asparagine 358. A helical membrane pass occupies residues 393–413 (ILLGILLGVAVIIIVVLLLYF). Over 414 to 424 (MVDNGTRLHDA) the chain is Intravirion. An N-linked (GlcNAc...) asparagine; by host glycan is attached at asparagine 417.

This sequence belongs to the influenza type C/coronaviruses hemagglutinin-esterase family. In terms of assembly, homodimer; disulfide-linked. Forms a complex with the M protein in the pre-Golgi. Associates then with S-M complex to form a ternary complex S-M-HE. Post-translationally, N-glycosylated in the host RER.

It is found in the virion membrane. The protein localises to the host cell membrane. It carries out the reaction N-acetyl-9-O-acetylneuraminate + H2O = N-acetylneuraminate + acetate + H(+). The catalysed reaction is N-acetyl-4-O-acetylneuraminate + H2O = N-acetylneuraminate + acetate + H(+). Its function is as follows. Structural protein that makes short spikes at the surface of the virus. Contains receptor binding and receptor-destroying activities. Mediates de-O-acetylation of N-acetyl-4-O-acetylneuraminic acid, which is probably the receptor determinant recognized by the virus on the surface of erythrocytes and susceptible cells. This receptor-destroying activity is important for virus release as it probably helps preventing self-aggregation and ensures the efficient spread of the progeny virus from cell to cell. May serve as a secondary viral attachment protein for initiating infection, the spike protein being the major one. May become a target for both the humoral and the cellular branches of the immune system. The protein is Hemagglutinin-esterase of Bovine coronavirus (strain 98TXSF-110-LUN) (BCoV-LUN).